The primary structure comprises 257 residues: Phosphate import ATP-binding protein PstB (257 aa).

In terms of domain architecture, ABC transporter spans 11 to 252; it reads LEVRDLNFFY…PQKKATEDYI (242 aa). Residue 43–50 participates in ATP binding; the sequence is GPSGCGKS.

Belongs to the ABC transporter superfamily. Phosphate importer (TC 3.A.1.7) family. In terms of assembly, the complex is composed of two ATP-binding proteins (PstB), two transmembrane proteins (PstC and PstA) and a solute-binding protein (PstS).

The protein localises to the cell inner membrane. It carries out the reaction phosphate(out) + ATP + H2O = ADP + 2 phosphate(in) + H(+). Part of the ABC transporter complex PstSACB involved in phosphate import. Responsible for energy coupling to the transport system. The polypeptide is Phosphate import ATP-binding protein PstB (Chromobacterium violaceum (strain ATCC 12472 / DSM 30191 / JCM 1249 / CCUG 213 / NBRC 12614 / NCIMB 9131 / NCTC 9757 / MK)).